A 663-amino-acid chain; its full sequence is Protein MICRORCHIDIA 6 (663 aa).

Residues 1-77 form a disordered region; the sequence is MSHDRSVNVS…PADDAGVTSS (77 aa). A compositionally biased stretch (polar residues) spans 49–62; it reads SVGQSAGQSSTSVV. The short motif at 552 to 559 is the Nuclear localization signal element; the sequence is KRKEHPDS. The stretch at 614 to 659 forms a coiled coil; it reads DRKVRSQNLEVKAMNLRSELENYKSEYERLMVELQALDLVKDEHRR.

This sequence belongs to the MORC ATPase protein family. Homodimer and heterodimers with MORC1/CRT1 and MORC2. Interacts directly with SUVH9. Component of an RNA-directed DNA methylation (RdDM) complex that contains at least MORC6, MORC1/CRT1, MORC2, SWI3D and SUVH9. Stimulated by interaction with DMS3. Interacts with IDN2, SWI3B, SWI3C and SWI3D. The cofactor is Mg(2+). It depends on Mn(2+) as a cofactor.

The protein resides in the nucleus. With respect to regulation, stimulated by DMS3. In terms of biological role, involved in RNA-directed DNA methylation (RdDM) as a component of the RdDM machinery and required for gene silencing. Together with SUVH2 and SUVH9, regulates the silencing of some transposable elements (TEs). Exhibits ATPase activity. May also be involved in the regulation of chromatin architecture/condensation to maintain gene silencing. Binds DNA/RNA in a non-specific manner and exhibits endonuclease activity. Probably involved in DNA repair. Positive regulator of defense against the oomycete Hyaloperonospora arabidopsidis (Hpa). The chain is Protein MICRORCHIDIA 6 from Arabidopsis thaliana (Mouse-ear cress).